Consider the following 838-residue polypeptide: Probable beta-glucosidase I (838 aa).

Asparagine 57 and asparagine 197 each carry an N-linked (GlcNAc...) asparagine glycan. Residue aspartate 225 is part of the active site. The region spanning 395-555 (EGEKGFKFRV…GQEELISKAA (161 aa)) is the PA14 domain. Asparagine 493 carries an N-linked (GlcNAc...) asparagine glycan.

It belongs to the glycosyl hydrolase 3 family.

It localises to the secreted. The catalysed reaction is Hydrolysis of terminal, non-reducing beta-D-glucosyl residues with release of beta-D-glucose.. It functions in the pathway glycan metabolism; cellulose degradation. In terms of biological role, beta-glucosidases are one of a number of cellulolytic enzymes involved in the degradation of cellulosic biomass. Catalyzes the last step releasing glucose from the inhibitory cellobiose. The sequence is that of Probable beta-glucosidase I (bglI) from Aspergillus clavatus (strain ATCC 1007 / CBS 513.65 / DSM 816 / NCTC 3887 / NRRL 1 / QM 1276 / 107).